The following is a 287-amino-acid chain: Inorganic pyrophosphatase (287 aa).

Arginine 79 serves as a coordination point for diphosphate. Mg(2+)-binding residues include aspartate 116, aspartate 121, and aspartate 153.

The protein belongs to the PPase family. Mg(2+) serves as cofactor.

It is found in the cytoplasm. It catalyses the reaction diphosphate + H2O = 2 phosphate + H(+). The sequence is that of Inorganic pyrophosphatase (IPP1) from Eremothecium gossypii (strain ATCC 10895 / CBS 109.51 / FGSC 9923 / NRRL Y-1056) (Yeast).